The chain runs to 504 residues: Dolichol kinase sec59 (504 aa).

The Cytoplasmic segment spans residues 1 to 55 (MYIMSKKCYDTSEKIDREQECVEVNYQHRNFESILEIFSVLFIPFLCNSGKKFLQ). Residues 56 to 76 (ISNASFFLPACFYLLGSSSII) form a helical membrane-spanning segment. A topological domain (lumenal) is located at residue Gln-77. The chain crosses the membrane as a helical span at residues 78–98 (LYEPLLWLSSFPFCILYVGFG). At 99–157 (ENSVLYHEMYTVCLYNALLSLTQRWKWLSIVLDGLGNSSVNLKLHETVILAFLEITQNS) the chain is on the cytoplasmic side. A helical membrane pass occupies residues 158 to 178 (FTFIEGILICTGLTGLCFATF). Over 179-187 (SYEVSPVVS) the chain is Lumenal. Residues 188–208 (VLSGVLLISLPTLILLNLCIL) traverse the membrane as a helical segment. Residues 209-215 (KLAAKLH) are Cytoplasmic-facing. Residues 216–236 (LSALFTTCLIYFFSALLVFLV) form a helical membrane-spanning segment. Topologically, residues 237–263 (SRSWVAGQLGQAPEVWLFNQIFSHRNS) are lumenal. A helical transmembrane segment spans residues 264-284 (LTRIKIIIWWIICLGCFIFIL). Topologically, residues 285–325 (LRSNRNNPLGKYFTTEDEVLNFRRKTYHALVVFLFLPVCCL) are cytoplasmic. The chain crosses the membrane as a helical span at residues 326 to 347 (DPHFLHLSFSGVLFIFLFVEGI). Residues 348–373 (RILRLKPFGKMIHEFLWEYTDNRDHK) are Lumenal-facing. Residues 374 to 394 (GPLIISHIYLLIGCAIPIWLS) traverse the membrane as a helical segment. Topologically, residues 395-403 (NALKGPVAS) are cytoplasmic. The helical transmembrane segment at 404 to 424 (VELLVGVLCLGCGDSMASIIG) threads the bilayer. Residues 425-440 (KRFGKHRISKTNKSIE) are Lumenal-facing. The helical transmembrane segment at 441-461 (GVFAFSISVFLVLHLTQAFHV) threads the bilayer. A topological domain (cytoplasmic) is located at residue Cys-462. Residues 463–483 (PSVTFWKTLFMSLCTAILEGV) traverse the membrane as a helical segment. Topologically, residues 484-504 (STENDNLILPMYMWVLYQALD) are lumenal.

It belongs to the polyprenol kinase family.

It is found in the endoplasmic reticulum membrane. It catalyses the reaction a di-trans,poly-cis-dolichol + CTP = a di-trans,poly-cis-dolichyl phosphate + CDP + H(+). The protein operates within protein modification; protein glycosylation. Its function is as follows. Catalyzes CTP-mediated phosphorylation of dolichol, the terminal step in de novo dolichyl monophosphate (Dol-P) biosynthesis. Dol-P is a lipid carrier essential for the synthesis of N-linked and O-linked oligosaccharides and for GPI anchors. This is Dolichol kinase sec59 from Schizosaccharomyces pombe (strain 972 / ATCC 24843) (Fission yeast).